The following is an 841-amino-acid chain: SLIT and NTRK-like protein 6 (841 aa).

The signal sequence occupies residues 1 to 26 (MKLWIHLFYSSLLACISLHSQTPVLS). The 41-residue stretch at 27 to 67 (SRGSCDSLCNCEEKDGTMLINCEAKGIKMVSEISVPPSRPF) folds into the LRRNT 1 domain. Over 27–608 (SRGSCDSLCN…RSLTDAVPLS (582 aa)) the chain is Extracellular. 5 LRR repeats span residues 89 to 110 (NAISIHLGFNNIADIEIGAFNG), 113 to 134 (LLKQLHINHNSLEILKEDTFHG), 137 to 158 (NLEFLQADNNFITVIEPSAFSK), 161 to 182 (RLKVLILNDNAIESLPPNIFRF), and 184 to 205 (PLTHLDLRGNQLQTLPYVGFLE). An LRRCT 1 domain is found at 218–269 (NKWACNCDLLQLKTWLENMPPQSIIGDVVCNSPPFFKGSILSRLKKESICPT). In terms of domain architecture, LRRNT 2 spans 320–361 (PSTQLPGPYCPIPCNCKVLSPSGLLIHCQERNIESLSDLRPP). 6 LRR repeats span residues 364-385 (NPRKLILAGNIIHSLMKSDLVE), 388-409 (TLEMLHLGNNRIEVLEEGSFMN), 412-433 (RLQKLYLNGNHLTKLSKGMFLG), 436-457 (NLEYLYLEYNAIKEILPGTFNP), 460-481 (KLKVLYLNNNLLQVLPPHIFSG), and 483-504 (PLTKVNLKTNQFTHLPVSNILD). The region spanning 517–568 (NPWDCSCDLVGLQQWIQKLSKNTVTDDILCTSPGHLDKKELKALNSEILCPG) is the LRRCT 2 domain. The chain crosses the membrane as a helical span at residues 609 to 629 (VLILGLLIMFITIVFCAAGIV). Residues 630-841 (VLVLHRRRRY…DYLEVLEQQT (212 aa)) are Cytoplasmic-facing.

The protein belongs to the SLITRK family. In adult brain, highly expressed in putamen with no expression in cerebral cortex. Expressed in adult and fetal lung and fetal liver. Also expressed at high levels in some brain tumors including medulloblastomas and primitive neuroectodermal tumors.

The protein localises to the cell membrane. Regulator of neurite outgrowth required for normal hearing and vision. This chain is SLIT and NTRK-like protein 6 (SLITRK6), found in Homo sapiens (Human).